A 938-amino-acid polypeptide reads, in one-letter code: Collagen alpha-1(I) chain (938 aa).

The interval 1–938 is disordered; sequence GGISVPGPMG…PGPPGPPGPP (938 aa). 4-hydroxyproline is present on residues Pro18, Pro21, Pro24, Pro33, Pro36, Pro39, Pro54, Pro69, Pro75, Pro84, and Pro90. A compositionally biased stretch (low complexity) spans 26 to 45; it reads PQGFQGPPGEPGEPGASGPM. The span at 57 to 71 shows a compositional bias: basic and acidic residues; the sequence is NGDDGEAGKPGRPGE. 5-hydroxylysine; alternate is present on Lys93. O-linked (Gal...) hydroxylysine; alternate glycosylation is present at Lys93. Residue Ser99 is modified to Phosphoserine. The segment covering 107-135 has biased composition (low complexity); sequence DAGPAGPKGRPGASGPAGARGNDGATGAA. 4-hydroxyproline is present on residues Pro117, Pro138, Pro147, Pro150, Pro177, Pro180, Pro192, Pro198, Pro207, Pro213, Pro216, and Pro231. The span at 137–149 shows a compositional bias: pro residues; it reads PPGPTGPAGPPGF. Residues 183–222 show a composition bias toward low complexity; sequence AGAAGPAGNPGADGQPGAKGANGAPGIAGAPGFPGARGPS. A 5-hydroxylysine modification is found at Lys234. 4-hydroxyproline occurs at positions 240, 243, 255, 264, 279, 285, 294, and 300. Residues 289–298 are compositionally biased toward gly residues; that stretch reads GERGGPGSRG. Lys309 carries the post-translational modification 5-hydroxylysine. 25 positions are modified to 4-hydroxyproline: Pro314, Pro323, Pro329, Pro335, Pro344, Pro347, Pro356, Pro365, Pro371, Pro383, Pro392, Pro401, Pro404, Pro422, Pro439, Pro445, Pro451, Pro458, Pro464, Pro476, Pro485, Pro497, Pro503, Pro509, and Pro518. Low complexity predominate over residues 338–364; that stretch reads KGLTGSPGSPGPDGKTGPPGPAGQDGR. The segment covering 373-392 has biased composition (low complexity); it reads ARGQAGVMGFPGPKGAAGEP. 5-hydroxylysine is present on Lys530. 4-hydroxyproline occurs at positions 536, 551, and 557. The segment covering 563–577 has biased composition (low complexity); sequence SGPSGPAGPTGARGA. The residue at position 566 (Ser566) is a Phosphoserine. 4-hydroxyproline occurs at positions 578, 584, 587, 596, 602, 620, 629, and 638. Residues 590–617 are compositionally biased toward low complexity; it reads AGFAGPPGADGQPGAKGEPGDAGAKGDA. The span at 619–631 shows a compositional bias: pro residues; it reads PPGPAGPTGPPGP. Lys641 carries the 5-hydroxylysine modification. Over residues 646-662 the composition is skewed to low complexity; sequence SAGPPGATGFPGAAGRV. Pro650 and Pro656 each carry 4-hydroxyproline. Pro664 bears the 3-hydroxyproline mark. Residues Pro665, Pro674, Pro677, Pro693, Pro703, Pro712, Pro730, Pro739, Pro742, Pro748, Pro763, Pro769, Pro775, Pro784, and Pro790 each carry the 4-hydroxyproline modification. Residues 762 to 772 are compositionally biased toward pro residues; that stretch reads PPGPMGPPGLA. Lys799 is modified (5-hydroxylysine). The span at 807–822 shows a compositional bias: pro residues; the sequence is PGPPGAPGAPGAPGPV. 4-hydroxyproline occurs at positions 810, 813, and 816. Over residues 843–867 the composition is skewed to low complexity; sequence AGPAGARGPAGPQGPRRGFSGLQGP. Pro871, Pro874, Pro892, and Pro907 each carry 4-hydroxyproline. The span at 874–907 shows a compositional bias: low complexity; the sequence is PGEQGPSGASGPAGPRGPPGSAGSPGKDGLNGLP. Pro912 carries the 3-hydroxyproline modification. A 4-hydroxyproline modification is found at Pro913. A compositionally biased stretch (pro residues) spans 923–938; that stretch reads VGPPGPPGPPGPPGPP. At Pro925 the chain carries 3-hydroxyproline. Pro926 bears the 4-hydroxyproline mark. Pro928 carries the post-translational modification 3-hydroxyproline. Pro929 carries the 4-hydroxyproline modification. Pro931 is subject to 3-hydroxyproline. Pro932, Pro935, and Pro938 each carry 4-hydroxyproline.

It belongs to the fibrillar collagen family. As to quaternary structure, trimers of one alpha 2(I) and two alpha 1(I) chains. In terms of processing, contains mostly 4-hydroxyproline. Proline residues at the third position of the tripeptide repeating unit (G-X-Y) are hydroxylated in some or all of the chains. Contains 3-hydroxyproline at a few sites. This modification occurs on the first proline residue in the sequence motif Gly-Pro-Hyp, where Hyp is 4-hydroxyproline. Post-translationally, lysine residues at the third position of the tripeptide repeating unit (G-X-Y) are 5-hydroxylated in some or all of the chains. In terms of processing, O-glycosylated on hydroxylated lysine residues. The O-linked glycan consists of a Glc-Gal disaccharide. Expressed in bones.

Its subcellular location is the secreted. It is found in the extracellular space. The protein localises to the extracellular matrix. Type I collagen is a member of group I collagen (fibrillar forming collagen). The protein is Collagen alpha-1(I) chain of Megalonyx jeffersonii (Jefferson's ground sloth).